We begin with the raw amino-acid sequence, 129 residues long: Large ribosomal subunit protein uL22 (129 aa).

Belongs to the universal ribosomal protein uL22 family. As to quaternary structure, part of the 50S ribosomal subunit.

Its function is as follows. This protein binds specifically to 23S rRNA; its binding is stimulated by other ribosomal proteins, e.g. L4, L17, and L20. It is important during the early stages of 50S assembly. It makes multiple contacts with different domains of the 23S rRNA in the assembled 50S subunit and ribosome. The globular domain of the protein is located near the polypeptide exit tunnel on the outside of the subunit, while an extended beta-hairpin is found that lines the wall of the exit tunnel in the center of the 70S ribosome. This Beijerinckia indica subsp. indica (strain ATCC 9039 / DSM 1715 / NCIMB 8712) protein is Large ribosomal subunit protein uL22.